A 173-amino-acid chain; its full sequence is Cytochrome c-type biogenesis protein CcmE (173 aa).

Topologically, residues 1–8 are cytoplasmic; it reads MNPRRKSR. The helical; Signal-anchor for type II membrane protein transmembrane segment at 9-29 threads the bilayer; sequence FKLVIFVVLGIAIASGLMLYA. The Periplasmic portion of the chain corresponds to 30 to 173; the sequence is LRQNIDLFYT…RDRQEKEGAK (144 aa). The heme site is built by H131 and Y135. Residues 152-173 are disordered; the sequence is GIEAADLKGESARDRQEKEGAK. A compositionally biased stretch (basic and acidic residues) spans 156–173; the sequence is ADLKGESARDRQEKEGAK.

This sequence belongs to the CcmE/CycJ family.

It localises to the cell inner membrane. Functionally, heme chaperone required for the biogenesis of c-type cytochromes. Transiently binds heme delivered by CcmC and transfers the heme to apo-cytochromes in a process facilitated by CcmF and CcmH. This Haemophilus influenzae (strain ATCC 51907 / DSM 11121 / KW20 / Rd) protein is Cytochrome c-type biogenesis protein CcmE.